The primary structure comprises 259 residues: Ribosomal RNA small subunit methyltransferase A (259 aa).

S-adenosyl-L-methionine-binding residues include Asn13, Leu15, Gly40, Glu61, Asp85, and Asn103.

Belongs to the class I-like SAM-binding methyltransferase superfamily. rRNA adenine N(6)-methyltransferase family. RsmA subfamily.

The protein resides in the cytoplasm. The catalysed reaction is adenosine(1518)/adenosine(1519) in 16S rRNA + 4 S-adenosyl-L-methionine = N(6)-dimethyladenosine(1518)/N(6)-dimethyladenosine(1519) in 16S rRNA + 4 S-adenosyl-L-homocysteine + 4 H(+). In terms of biological role, specifically dimethylates two adjacent adenosines (A1518 and A1519) in the loop of a conserved hairpin near the 3'-end of 16S rRNA in the 30S particle. May play a critical role in biogenesis of 30S subunits. This Neisseria gonorrhoeae (strain ATCC 700825 / FA 1090) protein is Ribosomal RNA small subunit methyltransferase A.